Here is a 150-residue protein sequence, read N- to C-terminus: 3-dehydroquinate dehydratase (150 aa).

Tyr-26 acts as the Proton acceptor in catalysis. Asn-77, His-83, and Asp-90 together coordinate substrate. His-103 serves as the catalytic Proton donor. Substrate is bound by residues 104-105 (LS) and Arg-114.

Belongs to the type-II 3-dehydroquinase family. In terms of assembly, homododecamer.

It catalyses the reaction 3-dehydroquinate = 3-dehydroshikimate + H2O. The protein operates within metabolic intermediate biosynthesis; chorismate biosynthesis; chorismate from D-erythrose 4-phosphate and phosphoenolpyruvate: step 3/7. Catalyzes a trans-dehydration via an enolate intermediate. The sequence is that of 3-dehydroquinate dehydratase from Yersinia pseudotuberculosis serotype O:1b (strain IP 31758).